A 541-amino-acid polypeptide reads, in one-letter code: Glutamine-dependent NAD(+) synthetase (541 aa).

The CN hydrolase domain occupies 4–243 (FKIALAQFSP…EELYYSEFDI (240 aa)). The Proton acceptor; for glutaminase activity role is filled by E44. K111 (for glutaminase activity) is an active-site residue. Y117 provides a ligand contact to L-glutamine. The Nucleophile; for glutaminase activity role is filled by C147. L-glutamine contacts are provided by S173 and K179. 286–293 (GLSGGIDS) is an ATP binding site. Position 369 (N369) interacts with deamido-NAD(+). T393 lines the ATP pocket. Residues E398 and K510 each coordinate deamido-NAD(+).

This sequence in the C-terminal section; belongs to the NAD synthetase family.

It carries out the reaction deamido-NAD(+) + L-glutamine + ATP + H2O = L-glutamate + AMP + diphosphate + NAD(+) + H(+). It participates in cofactor biosynthesis; NAD(+) biosynthesis; NAD(+) from deamido-NAD(+) (L-Gln route): step 1/1. Catalyzes the ATP-dependent amidation of deamido-NAD to form NAD. Uses L-glutamine as a nitrogen source. In vitro, can also use ammonia as donor with comparable specific activity, but cannot use nicotinate mononucleotide (NaMN) as substrate. The sequence is that of Glutamine-dependent NAD(+) synthetase from Acinetobacter baylyi (strain ATCC 33305 / BD413 / ADP1).